Reading from the N-terminus, the 154-residue chain is 6,7-dimethyl-8-ribityllumazine synthase (154 aa).

5-amino-6-(D-ribitylamino)uracil is bound by residues Phe-22, 56–58, and 80–82; these read AFE and AVI. 85 to 86 contacts (2S)-2-hydroxy-3-oxobutyl phosphate; it reads ST. Residue His-88 is the Proton donor of the active site. Phe-113 provides a ligand contact to 5-amino-6-(D-ribitylamino)uracil. A (2S)-2-hydroxy-3-oxobutyl phosphate-binding site is contributed by Arg-127.

It belongs to the DMRL synthase family.

The catalysed reaction is (2S)-2-hydroxy-3-oxobutyl phosphate + 5-amino-6-(D-ribitylamino)uracil = 6,7-dimethyl-8-(1-D-ribityl)lumazine + phosphate + 2 H2O + H(+). Its pathway is cofactor biosynthesis; riboflavin biosynthesis; riboflavin from 2-hydroxy-3-oxobutyl phosphate and 5-amino-6-(D-ribitylamino)uracil: step 1/2. In terms of biological role, catalyzes the formation of 6,7-dimethyl-8-ribityllumazine by condensation of 5-amino-6-(D-ribitylamino)uracil with 3,4-dihydroxy-2-butanone 4-phosphate. This is the penultimate step in the biosynthesis of riboflavin. This Clostridium beijerinckii (strain ATCC 51743 / NCIMB 8052) (Clostridium acetobutylicum) protein is 6,7-dimethyl-8-ribityllumazine synthase.